The primary structure comprises 569 residues: Putative potassium-transporting ATPase ATP-binding subunit (569 aa).

The next 2 helical transmembrane spans lie at 34–54 (PVMF…LAMV) and 58–78 (IAGS…TVLF). The active-site 4-aspartylphosphate intermediate is D194. ATP-binding positions include D231, E235, 264–271 (FTAQSRMS), and K282. Mg(2+)-binding residues include D405 and D409. The next 3 helical transmembrane spans lie at 475-495 (FAII…LNVM), 503-523 (AILS…PLAL), and 543-563 (IYGL…DVLL).

The protein belongs to the cation transport ATPase (P-type) (TC 3.A.3) family. Type IA subfamily. The system is composed of three essential subunits: KdpA, KdpB and KdpC.

The protein resides in the cell inner membrane. It carries out the reaction K(+)(out) + ATP + H2O = K(+)(in) + ADP + phosphate + H(+). In terms of biological role, part of the high-affinity ATP-driven potassium transport (or Kdp) system, which catalyzes the hydrolysis of ATP coupled with the electrogenic transport of potassium into the cytoplasm. This subunit is responsible for energy coupling to the transport system and for the release of the potassium ions to the cytoplasm. The sequence is that of Putative potassium-transporting ATPase ATP-binding subunit from Salmonella typhi.